Here is a 254-residue protein sequence, read N- to C-terminus: Aspartate/glutamate leucyltransferase (254 aa).

Belongs to the R-transferase family. Bpt subfamily.

Its subcellular location is the cytoplasm. It carries out the reaction N-terminal L-glutamyl-[protein] + L-leucyl-tRNA(Leu) = N-terminal L-leucyl-L-glutamyl-[protein] + tRNA(Leu) + H(+). It catalyses the reaction N-terminal L-aspartyl-[protein] + L-leucyl-tRNA(Leu) = N-terminal L-leucyl-L-aspartyl-[protein] + tRNA(Leu) + H(+). Functions in the N-end rule pathway of protein degradation where it conjugates Leu from its aminoacyl-tRNA to the N-termini of proteins containing an N-terminal aspartate or glutamate. The polypeptide is Aspartate/glutamate leucyltransferase (Xylella fastidiosa (strain M12)).